Consider the following 286-residue polypeptide: Beta-lactamase SHV-24 (286 aa).

Residues Met1 to Ala21 form the signal peptide. Ser66 acts as the Acyl-ester intermediate in catalysis. A disulfide bridge links Cys73 with Cys119. Residue Glu164 is the Proton acceptor of the active site. Lys230–Gly232 is a substrate binding site.

It belongs to the class-A beta-lactamase family.

It catalyses the reaction a beta-lactam + H2O = a substituted beta-amino acid. Hydrolyzes ampicillin. Can also hydrolyze cephaloridine, aztreonam and ceftazidime with a low catalytic rate. The sequence is that of Beta-lactamase SHV-24 (bla) from Escherichia coli.